A 1226-amino-acid chain; its full sequence is Stress response protein nst1 (1226 aa).

Disordered regions lie at residues 1–225 (MKGN…QEER), 294–388 (ANHP…FNFG), 423–491 (RMAR…RMEE), 526–727 (EELA…KRPA), 757–876 (TPAF…FSNH), and 944–1001 (GKDN…TDQA). The span at 45–59 (PADSAQPSPTITTAA) shows a compositional bias: polar residues. Over residues 89-99 (NKKKAKRRQKA) the composition is skewed to basic residues. The segment covering 113–130 (APSNGFPSPSPSHAQQST) has biased composition (polar residues). Positions 131–152 (EADHDDSHDEHLEEFNNRRDSR) are enriched in basic and acidic residues. The span at 170–180 (KKSKKKKKKSH) shows a compositional bias: basic residues. Basic and acidic residues predominate over residues 211–225 (ISKEKIWNTSSQEER). A compositionally biased stretch (polar residues) spans 326 to 335 (SYPSHHQPSH). The span at 343 to 372 (AEEDDEEEEVEEEYSEDEQDEDDYSDDEPS) shows a compositional bias: acidic residues. 2 stretches are compositionally biased toward basic and acidic residues: residues 423-432 (RMAREEDARD) and 442-453 (AGDRNAHYHPPA). Over residues 454-484 (DDEVDDEEYDEDYDDDEEEEYDSQDEEETMT) the composition is skewed to acidic residues. A coiled-coil region spans residues 517-708 (ARERQNMLLE…SKQEDRAAQK (192 aa)). Basic and acidic residues-rich tracts occupy residues 530-548 (DEKR…EAQK) and 556-706 (KKEL…DRAA). Low complexity-rich tracts occupy residues 707 to 716 (QKAAALATTA) and 777 to 790 (SVTT…QPGS). Composition is skewed to polar residues over residues 791 to 805 (AVSQ…TPIL) and 822 to 852 (SGTQ…SQAN).

The protein belongs to the NST1 family.

Its subcellular location is the cytoplasm. Its function is as follows. May act as a negative regulator of salt tolerance. The chain is Stress response protein nst1 (nst1) from Neurospora crassa (strain ATCC 24698 / 74-OR23-1A / CBS 708.71 / DSM 1257 / FGSC 987).